Here is a 606-residue protein sequence, read N- to C-terminus: Transmembrane 9 superfamily member 1 (606 aa).

The first 27 residues, 1–27 (MTVVGNPRSWSCRWLPILILLLGTGHG), serve as a signal peptide directing secretion. N-linked (GlcNAc...) asparagine glycosylation is present at asparagine 178. Helical transmembrane passes span 237–257 (LSII…AVIL), 310–330 (VLGV…MALL), 339–359 (GAIN…SGYV), and 373–393 (VWNI…TWSV). N-linked (GlcNAc...) asparagine glycosylation occurs at asparagine 401. Transmembrane regions (helical) follow at residues 412 to 432 (ILLL…IGGI), 469 to 489 (VGGF…FATV), 499 to 519 (GILF…SIAL), and 535 to 555 (SVLS…FYYA). Residue asparagine 559 is glycosylated (N-linked (GlcNAc...) asparagine). The chain crosses the membrane as a helical span at residues 570-590 (FGYSLLTGYVFFLMLGTISFF).

The protein belongs to the nonaspanin (TM9SF) (TC 9.A.2) family.

It localises to the lysosome membrane. Its subcellular location is the cytoplasmic vesicle. The protein localises to the autophagosome membrane. Plays an essential role in autophagy. The polypeptide is Transmembrane 9 superfamily member 1 (TM9SF1) (Pongo abelii (Sumatran orangutan)).